The chain runs to 327 residues: tRNA dimethylallyltransferase (327 aa).

14–21 (GPTASGKT) provides a ligand contact to ATP. Substrate is bound at residue 16 to 21 (TASGKT). 2 interaction with substrate tRNA regions span residues 39–42 (DSAL) and 163–167 (QRIQR).

This sequence belongs to the IPP transferase family. Monomer. Requires Mg(2+) as cofactor.

It carries out the reaction adenosine(37) in tRNA + dimethylallyl diphosphate = N(6)-dimethylallyladenosine(37) in tRNA + diphosphate. Functionally, catalyzes the transfer of a dimethylallyl group onto the adenine at position 37 in tRNAs that read codons beginning with uridine, leading to the formation of N6-(dimethylallyl)adenosine (i(6)A). This Xanthomonas axonopodis pv. citri (strain 306) protein is tRNA dimethylallyltransferase.